Consider the following 141-residue polypeptide: MSEVFPKIGRRRARILAFQALFAWDAAGITPETLTQFTWLRRNPPPSTQDLGFSRLLFLGTLEHLREIDGCVSSRLEHWDFVRLNKVDKAILRLSAYSLLFQKDIPPVVVIHEAVSIARDFGTDDSFRFVNGVLDNIAKSA.

It belongs to the NusB family.

Functionally, involved in transcription antitermination. Required for transcription of ribosomal RNA (rRNA) genes. Binds specifically to the boxA antiterminator sequence of the ribosomal RNA (rrn) operons. This Treponema pallidum (strain Nichols) protein is Transcription antitermination protein NusB.